Consider the following 96-residue polypeptide: Co-chaperonin GroES (96 aa).

Belongs to the GroES chaperonin family. As to quaternary structure, heptamer of 7 subunits arranged in a ring. Interacts with the chaperonin GroEL.

The protein resides in the cytoplasm. Together with the chaperonin GroEL, plays an essential role in assisting protein folding. The GroEL-GroES system forms a nano-cage that allows encapsulation of the non-native substrate proteins and provides a physical environment optimized to promote and accelerate protein folding. GroES binds to the apical surface of the GroEL ring, thereby capping the opening of the GroEL channel. The sequence is that of Co-chaperonin GroES from Solidesulfovibrio magneticus (strain ATCC 700980 / DSM 13731 / RS-1) (Desulfovibrio magneticus).